Consider the following 414-residue polypeptide: Protein FAM81B (414 aa).

The segment covering methionine 1–proline 13 has biased composition (polar residues). The tract at residues methionine 1–proline 43 is disordered. Coiled-coil stretches lie at residues asparagine 70–alanine 94, leucine 121–alanine 149, lysine 188–threonine 223, and leucine 266–serine 414.

The protein belongs to the FAM81 family.

This Bos taurus (Bovine) protein is Protein FAM81B (FAM81B).